Reading from the N-terminus, the 312-residue chain is uncharacterized protein (312 aa).

Positions 95-119 are disordered; the sequence is EKRRENPPKLTLPPLPPPAEERKKP.

It is found in the plastid. The protein resides in the chloroplast. This is an uncharacterized protein from Chlamydomonas moewusii (Chlamydomonas eugametos).